Here is a 203-residue protein sequence, read N- to C-terminus: Ras-related protein Rab-7L1 (203 aa).

GTP-binding residues include Ser-33, Lys-34, His-35, Tyr-36, Lys-37, and Thr-39. An Effector region motif is present at residues Tyr-36 to Phe-44. Thr-71 is modified (phosphothreonine; by LRRK2). Phosphoserine; by LRRK2 is present on Ser-72. The GTP site is built by Lys-126, Val-156, and Lys-157. 2 S-geranylgeranyl cysteine lipidation sites follow: Cys-202 and Cys-203.

This sequence belongs to the small GTPase superfamily. Rab family. In terms of assembly, interacts with LRRK2 (via the N-terminus); this interaction is direct and stimulates kinase activity. In terms of processing, in case of Salmonella enterica serovar Typhimurium (S.typhimurium) infection, is proteolytically cleaved between Gly-41 and Val-42 by the GtgE viral protease encoded on the Gifsy-2 lysogen bacteriophage, which therefore prevents the recruitment of RAB29 to S.typhimurium-containing vacuoles. In contrast, no proteolytically cleavage is detected in S.typhi-infected cells. Ubiquitous.

Its subcellular location is the cell membrane. It is found in the cytoplasm. The protein resides in the perinuclear region. The protein localises to the golgi apparatus. It localises to the golgi apparatus membrane. Its subcellular location is the trans-Golgi network. It is found in the vacuole. The protein resides in the cytoskeleton. The small GTPases Rab are key regulators in vesicle trafficking. Essential for maintaining the integrity of the endosome-trans-Golgi network structure. Together with LRRK2, plays a role in the retrograde trafficking pathway for recycling proteins, such as mannose 6 phosphate receptor (M6PR), between lysosomes and the Golgi apparatus in a retromer-dependent manner. Recruits LRRK2 to the Golgi complex and stimulates LRRK2 kinase activity. Stimulates phosphorylation of RAB10 'Thr-73' by LRRK2. Regulates neuronal process morphology in the intact central nervous system (CNS). May play a role in the formation of typhoid toxin transport intermediates during Salmonella enterica serovar Typhi (S.typhi) epithelial cell infection. The sequence is that of Ras-related protein Rab-7L1 (RAB29) from Homo sapiens (Human).